Reading from the N-terminus, the 222-residue chain is Interleukin-12 subunit alpha (222 aa).

An N-terminal signal peptide occupies residues 1–25 (MCPPRGLLLVAILVLLNHLDHLSLA). 3 cysteine pairs are disulfide-bonded: C40–C113, C67–C199, and C88–C126. 3 N-linked (GlcNAc...) asparagine glycosylation sites follow: N42, N96, and N110.

It belongs to the IL-6 superfamily. Heterodimer with IL12B; disulfide-linked. This heterodimer is known as interleukin IL-12. Heterodimer with EBI3/IL27B; not disulfide-linked. This heterodimer is known as interleukin IL-35. Interacts with NBR1; this interaction promotes IL-12 secretion.

Its subcellular location is the secreted. In terms of biological role, heterodimerizes with IL12B to form the IL-12 cytokine or with EBI3/IL27B to form the IL-35 cytokine. IL-12 is primarily produced by professional antigen-presenting cells (APCs) such as B-cells and dendritic cells (DCs) as well as macrophages and granulocytes and regulates T-cell and natural killer-cell responses, induces the production of interferon-gamma (IFN-gamma), favors the differentiation of T-helper 1 (Th1) cells and is an important link between innate resistance and adaptive immunity. Mechanistically, exerts its biological effects through a receptor composed of IL12R1 and IL12R2 subunits. Binding to the receptor results in the rapid tyrosine phosphorylation of a number of cellular substrates including the JAK family kinases TYK2 and JAK2. In turn, recruited STAT4 gets phosphorylated and translocates to the nucleus where it regulates cytokine/growth factor responsive genes. As part of IL-35, plays essential roles in maintaining the immune homeostasis of the liver microenvironment and also functions as an immune-suppressive cytokine. Mediates biological events through unconventional receptors composed of IL12RB2 and gp130/IL6ST heterodimers or homodimers. Signaling requires the transcription factors STAT1 and STAT4, which form a unique heterodimer that binds to distinct DNA sites. This is Interleukin-12 subunit alpha (IL12A) from Equus caballus (Horse).